Consider the following 960-residue polypeptide: Collagenase ColA (960 aa).

Positions 1–30 (MNKNLRFTQMMIGISTMALSFGSIQTQVSA) are cleaved as a signal peptide. Positions 31–92 (EETAPYNILQ…KRDEIQLKQS (62 aa)) are excised as a propeptide. The interval 93–365 (YTLAELNKMP…AVEQMKTNYG (273 aa)) is activator domain. Positions 93–764 (YTLAELNKMP…VFHGVATEEK (672 aa)) are S1 metalloprotease domain. The catalytic subdomain stretch occupies residues 375 to 644 (DLQKIREEGK…MQQLIDNQDK (270 aa)). His-500 contributes to the Zn(2+) binding site. Glu-501 is an active-site residue. Residues His-504 and Glu-532 each contribute to the Zn(2+) site. The segment at 652–764 (NDYLIQHAPK…VFHGVATEEK (113 aa)) is helper subdomain. The PKD domain occupies 768-849 (TTIVNMNGPY…ESKEQTKVTV (82 aa)). A compositionally biased stretch (basic and acidic residues) spans 836–845 (SRGKESKEQT). Positions 836-859 (SRGKESKEQTKVTVKQDPQTSESY) are disordered. Positions 846–857 (KVTVKQDPQTSE) are enriched in polar residues. The interval 852–960 (DPQTSESYEE…KNGEYSLLVK (109 aa)) is collagen-binding domain.

This sequence belongs to the peptidase M9B family. Collagenase subfamily. Requires Ca(2+) as cofactor. Zn(2+) is required as a cofactor.

It is found in the secreted. The catalysed reaction is Digestion of native collagen in the triple helical region at Xaa-|-Gly bonds. With synthetic peptides, a preference is shown for Gly at P3 and P1', Pro and Ala at P2 and P2', and hydroxyproline, Ala or Arg at P3'.. In terms of biological role, acts as a true collagenase, which is highly active and efficiently targets native tropocollagen. In vitro, can also cleave gelatin and the synthetic peptide FALGPA (furylacryloyl-Leu-Gly-Pro-Ala). May contribute to bacterial virulence in endophthalmitis or opportunistic infections via collagen degradation in the host extracellular matrix (ECM). This chain is Collagenase ColA, found in Bacillus cereus (strain ATCC 14579 / DSM 31 / CCUG 7414 / JCM 2152 / NBRC 15305 / NCIMB 9373 / NCTC 2599 / NRRL B-3711).